We begin with the raw amino-acid sequence, 300 residues long: Lysenin-related protein 2 (300 aa).

Residues 12–35 (EQIEVDVVAVWKEGYVYENRGSTS) are N-terminal cap domain. The tract at residues 36-109 (VEQKIKITKG…SKEIEHTITI (74 aa)) is beta-hairpin domain. Residues 110–158 (PPTSKFTRWQLNADVGGADIEYMYLIDEVTPIGGTLSIPQVIKSRAKIL) are N-terminal cap domain. The segment at 159–299 (VGREIYLGET…EDKWILEVVK (141 aa)) is C-terminal receptor-binding domain. Residues Lys187, Ser229, Tyr235, and Tyr284 each coordinate an N-(acyl)-sphingosylphosphocholine. A disulfide bridge connects residues Cys274 and Cys285.

It belongs to the lysenin family. Binds to sphingomyelin as a monomer by using its C-terminal domain. Forms a nonamer when sphingomyelin/LRP-2 ratio is lower than ca 500. Oligomerization, but not binding, is influenced by the fluidity of sphingomyelin. As to expression, expressed by coelomocytes.

The protein localises to the secreted. It is found in the target cell membrane. Pore-forming toxin that specifically binds sphingomyelin in the plasma membrane of various cells. Has hemolytic activity. It also has antibacterial activities against B.megaterium. This Eisenia fetida (Red wiggler worm) protein is Lysenin-related protein 2.